A 68-amino-acid chain; its full sequence is conotoxin S11.3 (68 aa).

Positions 1-26 (MMFRLTSVSCFLLVIVCLNLFQVVLT) are cleaved as a signal peptide. Intrachain disulfides connect Cys-29-Cys-43, Cys-36-Cys-48, Cys-42-Cys-52, and Cys-47-Cys-56. Tyr-60 is modified (tyrosine amide). The propeptide occupies 64–68 (ATFQE).

It belongs to the conotoxin I2 superfamily. Expressed by the venom duct.

The protein resides in the secreted. This Conus striatus (Striated cone) protein is conotoxin S11.3.